The primary structure comprises 392 residues: Bifunctional enzyme Fae/Hps (392 aa).

Positions 1 to 161 (MFQIGEALMG…EESNKSTHAI (161 aa)) are formaldehyde-activating enzyme. The active-site Proton donor is His-17. The substrate site is built by Asp-19, Leu-48, Lys-66, Thr-68, and Gln-83. The tract at residues 162-392 (MGFKVTRLWD…IDQFRVMTDF (231 aa)) is 3-hexulose-6-phosphate synthase.

This sequence in the N-terminal section; belongs to the formaldehyde-activating enzyme family. In the C-terminal section; belongs to the HPS/KGPDC family. HPS subfamily.

It carries out the reaction 5,6,7,8-tetrahydromethanopterin + formaldehyde = 5,10-methylenetetrahydromethanopterin + H2O. It catalyses the reaction D-ribulose 5-phosphate + formaldehyde = D-arabino-hex-3-ulose 6-phosphate. Its pathway is carbohydrate biosynthesis; D-ribose 5-phosphate biosynthesis. Its function is as follows. Catalyzes the condensation of formaldehyde with tetrahydromethanopterin (H(4)MPT) to 5,10-methylenetetrahydromethanopterin. Functionally, catalyzes the reversible formation of ribulose-5-phosphate and formaldehyde from 3-hexulose-6-phosphate. In Methanosarcina mazei (strain ATCC BAA-159 / DSM 3647 / Goe1 / Go1 / JCM 11833 / OCM 88) (Methanosarcina frisia), this protein is Bifunctional enzyme Fae/Hps.